The following is a 182-amino-acid chain: Peptidoglycan recognition protein (182 aa).

Residues 1–16 (MEILFVLFFVFVTVSG) form the signal peptide. 2 disulfide bridges follow: C18–C140 and C54–C60. In terms of domain architecture, N-acetylmuramoyl-L-alanine amidase spans 39-166 (RPVELVIIQH…RQLISTESPG (128 aa)).

This sequence belongs to the N-acetylmuramoyl-L-alanine amidase 2 family. Monomer. As to expression, strongly expressed in fat body with weak expression observed in hemocyte. No expression detected in gut.

Binds specifically to peptidoglycan and triggers the propenoloxidase cascade which is an important insect innate immune defense mechanism. The chain is Peptidoglycan recognition protein (PGRP) from Trichoplusia ni (Cabbage looper).